Reading from the N-terminus, the 365-residue chain is Histidinol-phosphate aminotransferase (365 aa).

Lys220 is subject to N6-(pyridoxal phosphate)lysine.

The protein belongs to the class-II pyridoxal-phosphate-dependent aminotransferase family. Histidinol-phosphate aminotransferase subfamily. As to quaternary structure, homodimer. Pyridoxal 5'-phosphate serves as cofactor.

It carries out the reaction L-histidinol phosphate + 2-oxoglutarate = 3-(imidazol-4-yl)-2-oxopropyl phosphate + L-glutamate. Its pathway is amino-acid biosynthesis; L-histidine biosynthesis; L-histidine from 5-phospho-alpha-D-ribose 1-diphosphate: step 7/9. In Xylella fastidiosa (strain 9a5c), this protein is Histidinol-phosphate aminotransferase.